The primary structure comprises 232 residues: Ubiquinone biosynthesis O-methyltransferase (232 aa).

Arginine 36, glycine 55, aspartate 76, and methionine 120 together coordinate S-adenosyl-L-methionine.

This sequence belongs to the methyltransferase superfamily. UbiG/COQ3 family.

The catalysed reaction is a 3-demethylubiquinol + S-adenosyl-L-methionine = a ubiquinol + S-adenosyl-L-homocysteine + H(+). It catalyses the reaction a 3-(all-trans-polyprenyl)benzene-1,2-diol + S-adenosyl-L-methionine = a 2-methoxy-6-(all-trans-polyprenyl)phenol + S-adenosyl-L-homocysteine + H(+). The protein operates within cofactor biosynthesis; ubiquinone biosynthesis. Its function is as follows. O-methyltransferase that catalyzes the 2 O-methylation steps in the ubiquinone biosynthetic pathway. This Chromobacterium violaceum (strain ATCC 12472 / DSM 30191 / JCM 1249 / CCUG 213 / NBRC 12614 / NCIMB 9131 / NCTC 9757 / MK) protein is Ubiquinone biosynthesis O-methyltransferase.